A 472-amino-acid chain; its full sequence is 3-isopropylmalate dehydratase large subunit (472 aa).

[4Fe-4S] cluster-binding residues include Cys-352, Cys-412, and Cys-415.

Belongs to the aconitase/IPM isomerase family. LeuC type 1 subfamily. Heterodimer of LeuC and LeuD. [4Fe-4S] cluster serves as cofactor.

It catalyses the reaction (2R,3S)-3-isopropylmalate = (2S)-2-isopropylmalate. It participates in amino-acid biosynthesis; L-leucine biosynthesis; L-leucine from 3-methyl-2-oxobutanoate: step 2/4. Its function is as follows. Catalyzes the isomerization between 2-isopropylmalate and 3-isopropylmalate, via the formation of 2-isopropylmaleate. The chain is 3-isopropylmalate dehydratase large subunit from Roseiflexus castenholzii (strain DSM 13941 / HLO8).